Consider the following 166-residue polypeptide: Large ribosomal subunit protein uL10 (166 aa).

The protein belongs to the universal ribosomal protein uL10 family. Part of the ribosomal stalk of the 50S ribosomal subunit. The N-terminus interacts with L11 and the large rRNA to form the base of the stalk. The C-terminus forms an elongated spine to which L12 dimers bind in a sequential fashion forming a multimeric L10(L12)X complex.

In terms of biological role, forms part of the ribosomal stalk, playing a central role in the interaction of the ribosome with GTP-bound translation factors. In Lysinibacillus sphaericus (strain C3-41), this protein is Large ribosomal subunit protein uL10.